The sequence spans 410 residues: METSSPRPPRPSSNPGLSLDARLGVDTRLWAKVLFTALYALIWALGAAGNALSAHVVLKARAGRAGRLRHHVLSLALAGLLLLLVGVPVELYSFVWFHYPWVFGDLGCRGYYFVHELCAYATVLSVAGLSAERCLAVCQPLRARSLLTPRRTRWLVALSWAASLGLALPMAVIMGQKHELETADGEPEPASRVCTVLVSRTALQVFIQVNVLVSFVLPLALTAFLNGVTVSHLLALCSQVPSTSTPGSSTPSRLELLSEEGLLSFIVWKKTFIQGGQVSLVRHKDVRRIRSLQRSVQVLRAIVVMYVICWLPYHARRLMYCYVPDDAWTDPLYNFYHYFYMVTNTLFYVSSAVTPLLYNAVSSSFRKLFLEAVSSLCGEHHPMKRLPPKPQSPTLMDTASGFGDPPETRT.

Residues 1–32 are Extracellular-facing; it reads METSSPRPPRPSSNPGLSLDARLGVDTRLWAK. Residues 33–55 traverse the membrane as a helical segment; the sequence is VLFTALYALIWALGAAGNALSAH. Residues 56-64 are Cytoplasmic-facing; sequence VVLKARAGR. A helical transmembrane segment spans residues 65-87; sequence AGRLRHHVLSLALAGLLLLLVGV. Topologically, residues 88–109 are extracellular; that stretch reads PVELYSFVWFHYPWVFGDLGCR. An intrachain disulfide couples C108 to C194. Residues 110-131 traverse the membrane as a helical segment; the sequence is GYYFVHELCAYATVLSVAGLSA. At 132–154 the chain is on the cytoplasmic side; that stretch reads ERCLAVCQPLRARSLLTPRRTRW. A helical membrane pass occupies residues 155–176; it reads LVALSWAASLGLALPMAVIMGQ. Residues 177-217 are Extracellular-facing; the sequence is KHELETADGEPEPASRVCTVLVSRTALQVFIQVNVLVSFVL. A helical transmembrane segment spans residues 218–237; it reads PLALTAFLNGVTVSHLLALC. The Cytoplasmic segment spans residues 238 to 297; sequence SQVPSTSTPGSSTPSRLELLSEEGLLSFIVWKKTFIQGGQVSLVRHKDVRRIRSLQRSVQ. A helical transmembrane segment spans residues 298 to 318; that stretch reads VLRAIVVMYVICWLPYHARRL. At 319 to 337 the chain is on the extracellular side; the sequence is MYCYVPDDAWTDPLYNFYH. The helical transmembrane segment at 338–358 threads the bilayer; it reads YFYMVTNTLFYVSSAVTPLLY. Residues 359 to 410 are Cytoplasmic-facing; it reads NAVSSSFRKLFLEAVSSLCGEHHPMKRLPPKPQSPTLMDTASGFGDPPETRT. C377 carries S-palmitoyl cysteine lipidation. The disordered stretch occupies residues 381–410; it reads HPMKRLPPKPQSPTLMDTASGFGDPPETRT.

Belongs to the G-protein coupled receptor 1 family. Neurotensin receptor subfamily. NTSR2 sub-subfamily. In terms of tissue distribution, expressed in prostate (at protein level).

It localises to the cell membrane. In terms of biological role, receptor for the tridecapeptide neurotensin. It is associated with G proteins that activate a phosphatidylinositol-calcium second messenger system. The sequence is that of Neurotensin receptor type 2 (NTSR2) from Homo sapiens (Human).